We begin with the raw amino-acid sequence, 360 residues long: Peptide chain release factor 1 (360 aa).

Residue Q235 is modified to N5-methylglutamine.

It belongs to the prokaryotic/mitochondrial release factor family. Post-translationally, methylated by PrmC. Methylation increases the termination efficiency of RF1.

It is found in the cytoplasm. In terms of biological role, peptide chain release factor 1 directs the termination of translation in response to the peptide chain termination codons UAG and UAA. This Methylobacillus flagellatus (strain ATCC 51484 / DSM 6875 / VKM B-1610 / KT) protein is Peptide chain release factor 1.